The chain runs to 300 residues: Glycine--tRNA ligase alpha subunit (300 aa).

The protein belongs to the class-II aminoacyl-tRNA synthetase family. As to quaternary structure, tetramer of two alpha and two beta subunits.

Its subcellular location is the cytoplasm. The enzyme catalyses tRNA(Gly) + glycine + ATP = glycyl-tRNA(Gly) + AMP + diphosphate. The sequence is that of Glycine--tRNA ligase alpha subunit from Prochlorococcus marinus (strain MIT 9313).